The chain runs to 597 residues: Glutamine--fructose-6-phosphate aminotransferase [isomerizing] (597 aa).

Cys2 functions as the Nucleophile; for GATase activity in the catalytic mechanism. A Glutamine amidotransferase type-2 domain is found at 2–218; the sequence is CGIVGYIGDS…ENSVGQISLE (217 aa). 2 consecutive SIS domains span residues 276–416 and 449–587; these read IDPE…QLGT and LSKR…VDHP. The For Fru-6P isomerization activity role is filled by Lys592.

Homodimer.

The protein resides in the cytoplasm. It carries out the reaction D-fructose 6-phosphate + L-glutamine = D-glucosamine 6-phosphate + L-glutamate. Its function is as follows. Catalyzes the first step in hexosamine metabolism, converting fructose-6P into glucosamine-6P using glutamine as a nitrogen source. The polypeptide is Glutamine--fructose-6-phosphate aminotransferase [isomerizing] (Helicobacter pylori (strain J99 / ATCC 700824) (Campylobacter pylori J99)).